The primary structure comprises 171 residues: uncharacterized protein (171 aa).

The signal sequence occupies residues 1–18 (MRYSKLTMLIPCALLLSA). The N-palmitoyl cysteine moiety is linked to residue Cys19. A lipid anchor (S-diacylglycerol cysteine) is attached at Cys19.

The protein localises to the cell membrane. This is an uncharacterized protein from Escherichia coli (strain K12).